A 250-amino-acid polypeptide reads, in one-letter code: Nuclear transcription factor Y subunit C-4 (250 aa).

The tract at residues 219 to 250 (GIAYGGQQGHPGYLWQDPQEQQEEPPAEQQSD) is disordered. The span at 238–250 (EQQEEPPAEQQSD) shows a compositional bias: acidic residues.

The protein belongs to the NFYC/HAP5 subunit family. As to quaternary structure, heterotrimeric transcription factor composed of three components, NF-YA, NF-YB and NF-YC. NF-YB and NF-YC must interact and dimerize for NF-YA association and DNA binding. Interacts with NFYB2. Interacts with NFYB8, NFYB10 and HD5/NFYB11.

It is found in the nucleus. It localises to the cytoplasm. Probable transcription factor involved in the regulation of flowering time under long day (LD) conditions. Functions as a repressor of flowering, independently of HD1 and GHD7. Controls flowering time by negatively regulating the expression of EHD1 and HD3A. Component of the NF-Y/HAP transcription factor complex. In Oryza sativa subsp. japonica (Rice), this protein is Nuclear transcription factor Y subunit C-4.